A 229-amino-acid polypeptide reads, in one-letter code: Protein ras-2 (229 aa).

Residue 15 to 22 (GDGGVGKT) coordinates GTP. Positions 37-45 (YDPTIEDSY) match the Effector region motif. 62–66 (DTAGQ) contacts GTP. The tract at residues 109–132 (KESTSSPSAYPGSSPLAATNPSAP) is disordered. Residues 111–126 (STSSPSAYPGSSPLAA) show a composition bias toward low complexity. 140–143 (NKSD) serves as a coordination point for GTP. Residues 188 to 229 (LRKQRQQGQSTPRALPPSGNSKSEKYSGTEKPKRPRGKCLII) are disordered. The segment covering 209–219 (KSEKYSGTEKP) has biased composition (basic and acidic residues). Over residues 220 to 229 (KRPRGKCLII) the composition is skewed to basic residues. Cys226 bears the Cysteine methyl ester mark. Cys226 is lipidated: S-farnesyl cysteine. Residues 227–229 (LII) constitute a propeptide, removed in mature form.

The protein belongs to the small GTPase superfamily. Ras family.

Its subcellular location is the cell membrane. It catalyses the reaction GTP + H2O = GDP + phosphate + H(+). In terms of biological role, ras proteins bind GDP/GTP and possess intrinsic GTPase activity. This is Protein ras-2 (ras-2) from Neurospora crassa (strain ATCC 24698 / 74-OR23-1A / CBS 708.71 / DSM 1257 / FGSC 987).